Consider the following 232-residue polypeptide: Fibrillarin-like rRNA/tRNA 2'-O-methyltransferase (232 aa).

S-adenosyl-L-methionine is bound by residues 87–88 (TT), 105–106 (EF), 130–131 (DA), and 150–153 (DVAQ).

This sequence belongs to the methyltransferase superfamily. Fibrillarin family. As to quaternary structure, interacts with nop5. Component of box C/D small ribonucleoprotein (sRNP) particles that contain rpl7ae, FlpA and nop5, plus a guide RNA.

Its function is as follows. Involved in pre-rRNA and tRNA processing. Utilizes the methyl donor S-adenosyl-L-methionine to catalyze the site-specific 2'-hydroxyl methylation of ribose moieties in rRNA and tRNA. Site specificity is provided by a guide RNA that base pairs with the substrate. Methylation occurs at a characteristic distance from the sequence involved in base pairing with the guide RNA. The chain is Fibrillarin-like rRNA/tRNA 2'-O-methyltransferase from Methanococcus maripaludis (strain C7 / ATCC BAA-1331).